The primary structure comprises 947 residues: Bromodomain testis-specific protein (947 aa).

Residues arginine 27–methionine 133 form the Bromo 1 domain. The residue at position 187 (serine 187) is a Phosphoserine. A Nuclear localization signal motif is present at residues lysine 209–proline 220. A Bromo 2 domain is found at valine 267–isoleucine 376. Disordered regions lie at residues glutamate 395–glutamine 421, proline 444–tyrosine 512, asparagine 610–methionine 690, and histidine 849–valine 873. A compositionally biased stretch (low complexity) spans asparagine 403–glycine 413. Residues aspartate 417–asparagine 470 adopt a coiled-coil conformation. Residues lysine 447 to glutamate 462 are compositionally biased toward basic residues. A compositionally biased stretch (basic and acidic residues) spans asparagine 470–lysine 481. Residues glutamate 482–glutamine 494 show a composition bias toward basic residues. The region spanning lysine 500–proline 582 is the NET domain. The segment covering valine 631–glutamate 668 has biased composition (low complexity). 2 stretches are compositionally biased toward basic and acidic residues: residues threonine 674 to methionine 690 and histidine 849 to arginine 865.

Belongs to the BET family. In terms of assembly, interacts with SMARCE1. Interacts with mRNA splicing machinery proteins SRSF2, DDX5, HNRNPK and TARDBP. Interacts with the acetylated N-terminus of histone H1, H2, H3 and H4. Interacts with P-TEFb components CDK9 and CCNT1/cyclin-T1. In terms of processing, ubiquitinated in a SPOP-dependent manner, leading to proteasomal degradation.

The protein resides in the nucleus. Functionally, testis-specific chromatin protein that specifically binds histone H4 acetylated at 'Lys-5' and 'Lys-8' (H4K5ac and H4K8ac, respectively) and plays a key role in spermatogenesis. Required in late pachytene spermatocytes: plays a role in meiotic and post-meiotic cells by binding to acetylated histones at the promoter of specific meiotic and post-meiotic genes, facilitating their activation at the appropriate time. In the post-meiotic phase of spermatogenesis, binds to hyperacetylated histones and participates in their general removal from DNA. Also recognizes and binds a subset of butyrylated histones: able to bind histone H4 butyrylated at 'Lys-8' (H4K8ac), while it is not able to bind H4 butyrylated at 'Lys-5' (H4K5ac). Also acts as a component of the splicing machinery in pachytene spermatocytes and round spermatids and participates in 3'-UTR truncation of specific mRNAs in post-meiotic spermatids. Required for chromocenter organization, a structure comprised of peri-centromeric heterochromatin. The chain is Bromodomain testis-specific protein (BRDT) from Macaca fascicularis (Crab-eating macaque).